We begin with the raw amino-acid sequence, 211 residues long: Outer-membrane lipoprotein carrier protein (211 aa).

A signal peptide spans 1 to 24; the sequence is MRNRILVSACAALAMFAMQAPAHA.

It belongs to the LolA family. As to quaternary structure, monomer.

The protein resides in the periplasm. In terms of biological role, participates in the translocation of lipoproteins from the inner membrane to the outer membrane. Only forms a complex with a lipoprotein if the residue after the N-terminal Cys is not an aspartate (The Asp acts as a targeting signal to indicate that the lipoprotein should stay in the inner membrane). The chain is Outer-membrane lipoprotein carrier protein from Cupriavidus taiwanensis (strain DSM 17343 / BCRC 17206 / CCUG 44338 / CIP 107171 / LMG 19424 / R1) (Ralstonia taiwanensis (strain LMG 19424)).